The chain runs to 391 residues: Protein ABCI12, chloroplastic (391 aa).

A chloroplast-targeting transit peptide spans 1 to 63; sequence MNHSNLANPT…LAAKRVFIVR (63 aa). Transmembrane regions (helical) follow at residues 134–154, 168–188, 229–249, 263–283, and 370–390; these read ANLVVRLGLVLCTALLSILVL, LLSGILFITLGLGSDGAPPML, VGSTAACLTFIIFQSASICLA, FLFPLTYIGVPVSEIILTLLL, and FASVLCLIGVISTALLSEYFL.

It localises to the plastid. The protein localises to the chloroplast. The protein resides in the membrane. This chain is Protein ABCI12, chloroplastic (ABCI12), found in Arabidopsis thaliana (Mouse-ear cress).